A 241-amino-acid polypeptide reads, in one-letter code: Eukaryotic translation initiation factor 6 (241 aa).

The protein belongs to the eIF-6 family. As to quaternary structure, monomer. Associates with the 60S ribosomal subunit.

The protein localises to the cytoplasm. The protein resides in the nucleus. It localises to the nucleolus. Binds to the 60S ribosomal subunit and prevents its association with the 40S ribosomal subunit to form the 80S initiation complex in the cytoplasm. Is also involved in ribosome biogenesis. Associates with pre-60S subunits in the nucleus and is involved in its nuclear export. This chain is Eukaryotic translation initiation factor 6, found in Encephalitozoon cuniculi (strain GB-M1) (Microsporidian parasite).